The primary structure comprises 848 residues: Protein NETWORKED 2C (848 aa).

The NAB domain occupies 10-90; that stretch reads YSWWWASHVR…ERYDHISKEL (81 aa). Residues 108-141 form a disordered region; sequence FAMNEDDDDDAPVSPRHHKNKTSNKNVPKVPDLP. Coiled coils occupy residues 172 to 204, 241 to 278, 305 to 454, and 752 to 797; these read LSKT…SYEN, EAQI…SRKQ, SEKE…KATN, and AKFE…SEEF.

Belongs to the NET family.

In terms of biological role, plant-specific actin binding protein. May be part of a membrane-cytoskeletal adapter complex. The polypeptide is Protein NETWORKED 2C (Arabidopsis thaliana (Mouse-ear cress)).